A 798-amino-acid polypeptide reads, in one-letter code: Neuroligin-1 (798 aa).

A signal peptide spans 1-17; sequence MERIYLLLLLFLPRIRS. Residues 18–685 are Extracellular-facing; that stretch reads YDVRSVTTSW…AAGSFTGKAL (668 aa). C86 and C125 are oxidised to a cystine. Residues N164, N292, and N315 are each glycosylated (N-linked (GlcNAc...) asparagine). C288 and C307 are joined by a disulfide. Positions 636 to 676 are disordered; it reads ANLPFPPPPMPPSPPPELTTKPKPSESPTTLQTTTESEKAA. The segment covering 639–652 has biased composition (pro residues); the sequence is PFPPPPMPPSPPPE. Positions 653–665 are enriched in low complexity; the sequence is LTTKPKPSESPTT. A helical transmembrane segment spans residues 686 to 706; it reads GGVIFIGCGFLIMNVCLLIAV. The Cytoplasmic portion of the chain corresponds to 707–798; sequence RREWGKKRRN…QAPTLEEIQV (92 aa). The interval 731–765 is disordered; it reads HGGGAEQYNSLNSPEPLLSASHKNSTSMRPAGISP.

It belongs to the type-B carboxylesterase/lipase family. As to quaternary structure, interacts (via extracellular domain) with isoform b of madd-4; the interaction is required for the localization to postsynaptic domains. Interacts with unc-49.

Its subcellular location is the cell membrane. It is found in the synapse. Functionally, probable neuronal cell surface protein thought to be involved in cell-cell-interactions by forming intercellular junctions through binding to beta-neurexins. Plays a role in the clustering of the GABA(A) receptor unc-49 at postsynaptic sites in neuromuscular junctions (NMJs) via the interaction with madd-4 and neurexin nrx-1 and is thereby required for normal GABAergic synaptic transmission. This Caenorhabditis elegans protein is Neuroligin-1 (nlg-1).